Reading from the N-terminus, the 396-residue chain is Orotidine 5'-phosphate decarboxylase (396 aa).

Substrate-binding positions include D46, 68 to 70, 103 to 112, Y346, and R365; these read KTH and DRKFVDIGST. The active-site Proton donor is K105.

The protein belongs to the OMP decarboxylase family.

The catalysed reaction is orotidine 5'-phosphate + H(+) = UMP + CO2. It participates in pyrimidine metabolism; UMP biosynthesis via de novo pathway; UMP from orotate: step 2/2. The protein is Orotidine 5'-phosphate decarboxylase (URA3) of Sordaria macrospora (strain ATCC MYA-333 / DSM 997 / K(L3346) / K-hell).